The following is a 906-amino-acid chain: Ectonucleotide pyrophosphatase/phosphodiesterase family member 1 (906 aa).

The tract at residues methionine 1–serine 25 is disordered. Over methionine 1–lysine 58 the chain is Cytoplasmic. Serine 25 carries the phosphoserine modification. The short motif at alanine 27 to proline 34 is the Di-leucine motif element. A helical; Signal-anchor for type II membrane protein membrane pass occupies residues valine 59–leucine 79. The Extracellular segment spans residues lysine 80–aspartate 906. SMB domains follow at residues glutamate 86 to threonine 126 and histidine 127 to lysine 170. Cystine bridges form between cysteine 90–cysteine 104, cysteine 94–cysteine 122, cysteine 102–cysteine 115, cysteine 108–cysteine 114, cysteine 131–cysteine 148, cysteine 136–cysteine 166, cysteine 146–cysteine 159, cysteine 152–cysteine 158, cysteine 177–cysteine 223, and cysteine 185–cysteine 397. N-linked (GlcNAc...) asparagine glycosylation occurs at asparagine 161. The phosphodiesterase stretch occupies residues valine 173–leucine 573. AMP contacts are provided by aspartate 200, threonine 238, and asparagine 259. Zn(2+)-binding residues include aspartate 200 and threonine 238. Threonine 238 (AMP-threonine intermediate) is an active-site residue. The CMP site is built by threonine 238 and asparagine 259. Positions 238 and 259 each coordinate dTMP. GMP is bound by residues threonine 238 and asparagine 259. Position 238 is a phosphothreonine (threonine 238). N-linked (GlcNAc...) asparagine glycosylation occurs at asparagine 267. Residues leucine 272, lysine 277, and tyrosine 322 each contribute to the GMP site. Residues lysine 277 and tyrosine 322 each coordinate AMP. The CMP site is built by lysine 277 and tyrosine 322. A dTMP-binding site is contributed by tyrosine 322. N-linked (GlcNAc...) asparagine glycosylation is present at asparagine 323. Aspartate 358 contacts AMP. 4 residues coordinate Zn(2+): aspartate 358, histidine 362, aspartate 405, and histidine 406. Aspartate 358 provides a ligand contact to CMP. Aspartate 358 serves as a coordination point for dTMP. Aspartate 358 lines the GMP pocket. Histidine 362 is a 2',3'-cGAMP binding site. AMP is bound at residue histidine 406. A CMP-binding site is contributed by histidine 406. A dTMP-binding site is contributed by histidine 406. Residue histidine 406 coordinates GMP. 6 cysteine pairs are disulfide-bonded: cysteine 413–cysteine 512, cysteine 462–cysteine 849, cysteine 596–cysteine 653, cysteine 607–cysteine 707, cysteine 609–cysteine 692, and cysteine 819–cysteine 829. The N-linked (GlcNAc...) asparagine glycan is linked to asparagine 459. 2',3'-cGAMP is bound at residue serine 514. Histidine 517 contributes to the AMP binding site. Position 517 (histidine 517) interacts with Zn(2+). Position 517 (histidine 517) interacts with CMP. Residue histidine 517 participates in dTMP binding. Histidine 517 serves as a coordination point for GMP. 2 N-linked (GlcNAc...) asparagine glycosylation sites follow: asparagine 567 and asparagine 624. Residues lysine 579–aspartate 628 form a linker region. Positions serine 635–aspartate 906 are nuclease-like domain. Positions 781, 783, 785, 787, and 789 each coordinate Ca(2+).

The protein belongs to the nucleotide pyrophosphatase/phosphodiesterase family. Ectonucleotide pyrophosphatase/phosphodiesterase family member 1: Homodimer. Ectonucleotide pyrophosphatase/phosphodiesterase family member 1: Interacts with INSR; leading to inhibit INSR autophosphorylation and subsequent activation of INSR kinase activity. Ectonucleotide pyrophosphatase/phosphodiesterase family member 1, secreted form: Monomeric. Zn(2+) serves as cofactor. In terms of processing, the secreted form is produced through cleavage at Lys-85 by intracellular processing.

It is found in the cell membrane. The protein resides in the basolateral cell membrane. Its subcellular location is the secreted. It carries out the reaction Hydrolytically removes 5'-nucleotides successively from the 3'-hydroxy termini of 3'-hydroxy-terminated oligonucleotides.. The enzyme catalyses a ribonucleoside 5'-triphosphate + H2O = a ribonucleoside 5'-phosphate + diphosphate + H(+). The catalysed reaction is ATP + H2O = AMP + diphosphate + H(+). It catalyses the reaction UTP + H2O = UMP + diphosphate + H(+). It carries out the reaction GTP + H2O = GMP + diphosphate + H(+). The enzyme catalyses CTP + H2O = CMP + diphosphate + H(+). The catalysed reaction is 2',3'-cGAMP + 2 H2O = GMP + AMP + 2 H(+). It catalyses the reaction P(1),P(4)-bis(5'-adenosyl) tetraphosphate + H2O = AMP + ATP + 2 H(+). It carries out the reaction 3',5'-cyclic AMP + H2O = AMP + H(+). At low concentrations of ATP, a phosphorylated intermediate is formed which inhibits further hydrolysis. Functionally, nucleotide pyrophosphatase that generates diphosphate (PPi) and functions in bone mineralization and soft tissue calcification by regulating pyrophosphate levels. PPi inhibits bone mineralization and soft tissue calcification by binding to nascent hydroxyapatite crystals, thereby preventing further growth of these crystals. Preferentially hydrolyzes ATP, but can also hydrolyze other nucleoside 5' triphosphates such as GTP, CTP and UTP to their corresponding monophosphates with release of pyrophosphate, as well as diadenosine polyphosphates, and also 3',5'-cAMP to AMP. May also be involved in the regulation of the availability of nucleotide sugars in the endoplasmic reticulum and Golgi, and the regulation of purinergic signaling. Inhibits ectopic joint calcification and maintains articular chondrocytes by repressing hedgehog signaling; it is however unclear whether hedgehog inhibition is direct or indirect. Appears to modulate insulin sensitivity. Also involved in melanogenesis. Also able to hydrolyze 2',3'-cGAMP (cyclic GMP-AMP), a second messenger that activates TMEM173/STING and triggers type-I interferon production. 2',3'-cGAMP degradation takes place in the lumen or extracellular space, and not in the cytosol where it is produced; the role of 2',3'-cGAMP hydrolysis is therefore unclear. Not able to hydrolyze the 2',3'-cGAMP linkage isomer 3'-3'-cGAMP. The chain is Ectonucleotide pyrophosphatase/phosphodiesterase family member 1 from Rattus norvegicus (Rat).